A 366-amino-acid polypeptide reads, in one-letter code: tRNA-specific 2-thiouridylase MnmA (366 aa).

Residues 6 to 13 (GLSGGVDS) and methionine 32 contribute to the ATP site. The Nucleophile role is filled by cysteine 96. Residues cysteine 96 and cysteine 196 are joined by a disulfide bond. Residue glycine 120 coordinates ATP. The tract at residues 146–148 (KDQ) is interaction with tRNA. Catalysis depends on cysteine 196, which acts as the Cysteine persulfide intermediate. Residues 302–303 (RY) form an interaction with tRNA region.

This sequence belongs to the MnmA/TRMU family.

The protein localises to the cytoplasm. The catalysed reaction is S-sulfanyl-L-cysteinyl-[protein] + uridine(34) in tRNA + AH2 + ATP = 2-thiouridine(34) in tRNA + L-cysteinyl-[protein] + A + AMP + diphosphate + H(+). Functionally, catalyzes the 2-thiolation of uridine at the wobble position (U34) of tRNA, leading to the formation of s(2)U34. The chain is tRNA-specific 2-thiouridylase MnmA from Treponema denticola (strain ATCC 35405 / DSM 14222 / CIP 103919 / JCM 8153 / KCTC 15104).